We begin with the raw amino-acid sequence, 345 residues long: Large ribosomal subunit protein uL10 (345 aa).

Positions 303–345 are disordered; the sequence is SLPQTAAPQQTPQPTEAPKEEAQEEKKEGPSEEEIAGSLASLF. Residues 305–318 show a composition bias toward low complexity; the sequence is PQTAAPQQTPQPTE. Residues 319–332 show a composition bias toward basic and acidic residues; it reads APKEEAQEEKKEGP.

This sequence belongs to the universal ribosomal protein uL10 family. Part of the 50S ribosomal subunit. Forms part of the ribosomal stalk which helps the ribosome interact with GTP-bound translation factors. Forms a heptameric L10(L12)2(L12)2(L12)2 complex, where L10 forms an elongated spine to which the L12 dimers bind in a sequential fashion.

Functionally, forms part of the ribosomal stalk, playing a central role in the interaction of the ribosome with GTP-bound translation factors. The protein is Large ribosomal subunit protein uL10 of Pyrobaculum aerophilum (strain ATCC 51768 / DSM 7523 / JCM 9630 / CIP 104966 / NBRC 100827 / IM2).